A 209-amino-acid polypeptide reads, in one-letter code: Protein-L-isoaspartate O-methyltransferase (209 aa).

Ser60 is a catalytic residue.

Belongs to the methyltransferase superfamily. L-isoaspartyl/D-aspartyl protein methyltransferase family.

The protein localises to the cytoplasm. The catalysed reaction is [protein]-L-isoaspartate + S-adenosyl-L-methionine = [protein]-L-isoaspartate alpha-methyl ester + S-adenosyl-L-homocysteine. Its function is as follows. Catalyzes the methyl esterification of L-isoaspartyl residues in peptides and proteins that result from spontaneous decomposition of normal L-aspartyl and L-asparaginyl residues. It plays a role in the repair and/or degradation of damaged proteins. The chain is Protein-L-isoaspartate O-methyltransferase from Methanococcus vannielii (strain ATCC 35089 / DSM 1224 / JCM 13029 / OCM 148 / SB).